Here is a 65-residue protein sequence, read N- to C-terminus: Large ribosomal subunit protein bL35 (65 aa).

The span at Met-1 to Val-16 shows a compositional bias: basic residues. A disordered region spans residues Met-1–Gly-25.

The protein belongs to the bacterial ribosomal protein bL35 family.

The chain is Large ribosomal subunit protein bL35 from Bordetella parapertussis (strain 12822 / ATCC BAA-587 / NCTC 13253).